The following is a 1046-amino-acid chain: Nuclear pore complex protein NUP96 (1046 aa).

Residues 51–187 (SPDYFLKPCI…GLWKFFVPHF (137 aa)) enclose the Peptidase S59 domain. Polar residues predominate over residues 283 to 295 (RNVRPSQKIAQRN). The segment at 283-304 (RNVRPSQKIAQRNSHQDPPPVV) is disordered. Serine 523 is modified (phosphoserine).

Part of the nuclear pore complex (NPC). The NPC has an eight-fold symmetrical structure comprising a central transport channel and two rings, the cytoplasmic and nuclear rings, to which eight filaments are attached. The cytoplasmic filaments have loose ends, while the nuclear filaments are joined in a distal ring, forming a nuclear basket. NPCs are highly dynamic in configuration and composition, and can be devided in 3 subcomplexes, the NUP62 subcomplex, the NUP107-160 subcomplex and the NUP93 subcomplex, containing approximately 30 different nucleoporin proteins. As to expression, expressed in roots, leaves, stems, flowers and siliques.

The protein localises to the nucleus membrane. The protein resides in the nucleus. It is found in the nuclear pore complex. Its function is as follows. Contributes to the transfer of mature mRNA from the nucleus to the cytosol. Required for both R gene-mediated and basal disease resistance. RNA export seems to play a critical role in stress responses and regulation of plant growth and development. This Arabidopsis thaliana (Mouse-ear cress) protein is Nuclear pore complex protein NUP96.